We begin with the raw amino-acid sequence, 747 residues long: NAD-dependent protein deacetylase sirtuin-1 (747 aa).

The interval 1 to 135 is disordered; sequence MADEAALALQ…DDEGEEEEEA (135 aa). Residue Ala2 is modified to N-acetylalanine. Positions 2–139 are interaction with CLOCK; sequence ADEAALALQP…EEEEEAAAAA (138 aa). Positions 2–268 are interaction with H1-4; sequence ADEAALALQP…LTGAGVSVSC (267 aa). Residues Ser14 and Ser26 each carry the phosphoserine modification. Ser27 is modified (phosphoserine; by MAPK8). A Nuclear localization signal motif is present at residues 32–39; that stretch reads PLRKRPRR. Phosphoserine; by MAPK8 is present on Ser47. Over residues 61-100 the composition is skewed to low complexity; the sequence is PAAARGCPGAAAAALWREAEAEAAAAGGEQEAQATAAAGE. Over residues 120-135 the composition is skewed to acidic residues; that stretch reads LYDEDDDDEGEEEEEA. Positions 138–145 match the Nuclear export signal motif; sequence AAIGYRDN. Positions 143 to 541 are interaction with CCAR2; it reads RDNLLFGDEI…LHVSEDSSSP (399 aa). 4 positions are modified to phosphoserine: Ser159, Ser162, Ser172, and Ser173. A Nuclear localization signal motif is present at residues 223–230; it reads IVINILSE. In terms of domain architecture, Deacetylase sirtuin-type spans 236–496; the sequence is KRKDINTIED…NELCHRLGGE (261 aa). An N6-acetyllysine modification is found at Lys238. Residues 256–259 are required for interaction with the sumoylated form of CCAR2; it reads IIVL. Residues 261–280 and 345–348 contribute to the NAD(+) site; these read GAGV…DGIY and QNID. Residue His363 is the Proton acceptor of the active site. Cys371 and Cys374 together coordinate Zn(2+). Lys377 is modified (N6-acetyllysine). Residues Cys395 and Cys398 each contribute to the Zn(2+) site. 2 positions are modified to S-nitrosocysteine: Cys395 and Cys398. The Nuclear export signal signature appears at 425 to 431; sequence AMKYDKD. An N6-acetyllysine modification is found at Lys430. NAD(+) contacts are provided by residues 440–442, 465–467, and Cys482; these read GSS and NRE. N6-acetyllysine is present on Lys513. Disordered stretches follow at residues 523–549 and 562–587; these read YLSE…PPDS and SNDD…TSRN. Thr530 is subject to Phosphothreonine; by DYRK1A, DYRK3 and MAPK8. A Phosphoserine modification is found at Ser535. Over residues 537–549 the composition is skewed to polar residues; it reads DSSSPERTSPPDS. The tract at residues 538 to 540 is phosphorylated at one of three serine residues; sequence SSS. Thr544 carries the phosphothreonine modification. A Phosphoserine modification is found at Ser545. A compositionally biased stretch (basic and acidic residues) spans 569 to 580; the sequence is SESKGCMEEKPQ. Residue Lys610 is modified to N6-acetyllysine. 2 positions are modified to phosphoserine; by CaMK2: Ser659 and Ser661. The tract at residues 663 to 726 is disordered; that stretch reads DDVLSSSSCG…FGTDGDDQEA (64 aa). The span at 666-677 shows a compositional bias: low complexity; that stretch reads LSSSSCGSNSDS. Residues 687-707 show a composition bias toward acidic residues; that stretch reads EPMEDESEIEEFYNGLEDEPD. Position 719 is a phosphothreonine (Thr719). Ser747 carries the post-translational modification Phosphoserine.

The protein belongs to the sirtuin family. Class I subfamily. In terms of assembly, interacts with XBP1 isoform 2. Found in a complex with PCAF and MYOD1. Interacts with FOXO1; the interaction deacetylates FOXO1, resulting in its nuclear retention and promotion of its transcriptional activity Component of the eNoSC complex, composed of SIRT1, SUV39H1 and RRP8. Interacts with HES1, HEY2 and PML. Interacts with RPS19BP1/AROS. Interacts with CCAR2 (via N-terminus); the interaction disrupts the interaction between SIRT1 and p53/TP53. Interacts with SETD7; the interaction induces the dissociation of SIRT1 from p53/TP53 and increases p53/TP53 activity. Interacts with MYCN, NR1I2, CREBZF, TSC2, TLE1, FOS, JUN, NR0B2, PPARG, NCOR, IRS1, IRS2 and NMNAT1. Interacts with HNF1A; the interaction occurs under nutrient restriction. Interacts with SUZ12; the interaction mediates the association with the PRC4 histone methylation complex which is specific as an association with PCR2 and PCR3 complex variants is not found. Interacts with BCL6; leads to a epigenetic repression of specific target genes. Interacts with CLOCK, BMAL1 and PER2. Interacts with PPARA; the interaction seems to be modulated by NAD(+) levels. Interacts with NR1H3 and this interaction is inhibited in the presence of CCAR2. Interacts with CHEK2. Interacts with p53/TP53. Exhibits a preferential interaction with sumoylated CCAR2 over its unmodified form. Interacts with PACS2. Interacts with SIRT7. Interacts with PUS7. Interacts with TULP3. Interacts with MORN3; the interaction enhances the ubiquitination of p53/TP53. As to quaternary structure, (Microbial infection) Interacts with HIV-1 Tat. Zn(2+) is required as a cofactor. Post-translationally, methylated on multiple lysine residues; methylation is enhanced after DNA damage and is dispensable for deacetylase activity toward p53/TP53. In terms of processing, phosphorylated. Phosphorylated by STK4/MST1, resulting in inhibition of SIRT1-mediated p53/TP53 deacetylation. Phosphorylation by MAPK8/JNK1 at Ser-27, Ser-47, and Thr-530 leads to increased nuclear localization and enzymatic activity. Phosphorylation at Thr-530 by DYRK1A and DYRK3 activates deacetylase activity and promotes cell survival. Phosphorylation by mammalian target of rapamycin complex 1 (mTORC1) at Ser-47 inhibits deacetylation activity. Phosphorylated by CaMK2, leading to increased p53/TP53 and NF-kappa-B p65/RELA deacetylation activity. Phosphorylation at Ser-27 implicating MAPK9 is linked to protein stability. There is some ambiguity for some phosphosites: Ser-159/Ser-162 and Thr-544/Ser-545. Proteolytically cleaved by cathepsin B upon TNF-alpha treatment to yield catalytic inactive but stable SirtT1 75 kDa fragment (75SirT1). Post-translationally, S-nitrosylated by GAPDH, leading to inhibit the NAD-dependent protein deacetylase activity. In terms of processing, acetylated at various Lys residues. Deacetylated via an autocatalytic mechanism. Autodeacetylation at Lys-238 promotes its protein deacetylase activity. Ubiquitinated; leading to degradation. Deubiquitinated by USP22; leading to stabilization. In terms of tissue distribution, widely expressed.

It localises to the nucleus. The protein resides in the PML body. The protein localises to the cytoplasm. Its subcellular location is the mitochondrion. It carries out the reaction N(6)-acetyl-L-lysyl-[protein] + NAD(+) + H2O = 2''-O-acetyl-ADP-D-ribose + nicotinamide + L-lysyl-[protein]. The catalysed reaction is N(6)-propanoyl-L-lysyl-[protein] + NAD(+) + H2O = 3''-O-propanoyl-ADP-D-ribose + nicotinamide + L-lysyl-[protein]. It catalyses the reaction N(6)-(2E)-butenoyl-L-lysyl-[protein] + NAD(+) + H2O = 2''-O-(2E)-but-2-enoyl-ADP-D-ribose + nicotinamide + L-lysyl-[protein]. The enzyme catalyses N(6)-[(S)-lactoyl]-L-lysyl-[protein] + NAD(+) + H2O = 2''-O-(S)-lactoyl-ADP-D-ribose + nicotinamide + L-lysyl-[protein]. Its activity is regulated as follows. Inhibited by nicotinamide. Activated by resveratrol (3,5,4'-trihydroxy-trans-stilbene), butein (3,4,2',4'-tetrahydroxychalcone), piceatannol (3,5,3',4'-tetrahydroxy-trans-stilbene), Isoliquiritigenin (4,2',4'-trihydroxychalcone), fisetin (3,7,3',4'-tetrahydroxyflavone) and quercetin (3,5,7,3',4'-pentahydroxyflavone). MAPK8/JNK1 and RPS19BP1/AROS act as positive regulators of deacetylation activity. Negatively regulated by CCAR2. In terms of biological role, NAD-dependent protein deacetylase that links transcriptional regulation directly to intracellular energetics and participates in the coordination of several separated cellular functions such as cell cycle, response to DNA damage, metabolism, apoptosis and autophagy. Can modulate chromatin function through deacetylation of histones and can promote alterations in the methylation of histones and DNA, leading to transcriptional repression. Deacetylates a broad range of transcription factors and coregulators, thereby regulating target gene expression positively and negatively. Serves as a sensor of the cytosolic ratio of NAD(+)/NADH which is altered by glucose deprivation and metabolic changes associated with caloric restriction. Is essential in skeletal muscle cell differentiation and in response to low nutrients mediates the inhibitory effect on skeletal myoblast differentiation which also involves 5'-AMP-activated protein kinase (AMPK) and nicotinamide phosphoribosyltransferase (NAMPT). Component of the eNoSC (energy-dependent nucleolar silencing) complex, a complex that mediates silencing of rDNA in response to intracellular energy status and acts by recruiting histone-modifying enzymes. The eNoSC complex is able to sense the energy status of cell: upon glucose starvation, elevation of NAD(+)/NADP(+) ratio activates SIRT1, leading to histone H3 deacetylation followed by dimethylation of H3 at 'Lys-9' (H3K9me2) by SUV39H1 and the formation of silent chromatin in the rDNA locus. Deacetylates 'Lys-266' of SUV39H1, leading to its activation. Inhibits skeletal muscle differentiation by deacetylating PCAF and MYOD1. Deacetylates H2A and 'Lys-26' of H1-4. Deacetylates 'Lys-16' of histone H4 (in vitro). Involved in NR0B2/SHP corepression function through chromatin remodeling: Recruited to LRH1 target gene promoters by NR0B2/SHP thereby stimulating histone H3 and H4 deacetylation leading to transcriptional repression. Proposed to contribute to genomic integrity via positive regulation of telomere length; however, reports on localization to pericentromeric heterochromatin are conflicting. Proposed to play a role in constitutive heterochromatin (CH) formation and/or maintenance through regulation of the available pool of nuclear SUV39H1. Upon oxidative/metabolic stress decreases SUV39H1 degradation by inhibiting SUV39H1 polyubiquitination by MDM2. This increase in SUV39H1 levels enhances SUV39H1 turnover in CH, which in turn seems to accelerate renewal of the heterochromatin which correlates with greater genomic integrity during stress response. Deacetylates 'Lys-382' of p53/TP53 and impairs its ability to induce transcription-dependent proapoptotic program and modulate cell senescence. Deacetylates TAF1B and thereby represses rDNA transcription by the RNA polymerase I. Deacetylates MYC, promotes the association of MYC with MAX and decreases MYC stability leading to compromised transformational capability. Deacetylates FOXO3 in response to oxidative stress thereby increasing its ability to induce cell cycle arrest and resistance to oxidative stress but inhibiting FOXO3-mediated induction of apoptosis transcriptional activity; also leading to FOXO3 ubiquitination and protesomal degradation. Appears to have a similar effect on MLLT7/FOXO4 in regulation of transcriptional activity and apoptosis. Deacetylates DNMT1; thereby impairs DNMT1 methyltransferase-independent transcription repressor activity, modulates DNMT1 cell cycle regulatory function and DNMT1-mediated gene silencing. Deacetylates RELA/NF-kappa-B p65 thereby inhibiting its transactivating potential and augments apoptosis in response to TNF-alpha. Deacetylates HIF1A, KAT5/TIP60, RB1 and HIC1. Deacetylates FOXO1 resulting in its nuclear retention and enhancement of its transcriptional activity leading to increased gluconeogenesis in liver. Inhibits E2F1 transcriptional activity and apoptotic function, possibly by deacetylation. Involved in HES1- and HEY2-mediated transcriptional repression. In cooperation with MYCN seems to be involved in transcriptional repression of DUSP6/MAPK3 leading to MYCN stabilization by phosphorylation at 'Ser-62'. Deacetylates MEF2D. Required for antagonist-mediated transcription suppression of AR-dependent genes which may be linked to local deacetylation of histone H3. Represses HNF1A-mediated transcription. Required for the repression of ESRRG by CREBZF. Deacetylates NR1H3 and NR1H2 and deacetylation of NR1H3 at 'Lys-434' positively regulates transcription of NR1H3:RXR target genes, promotes NR1H3 proteasomal degradation and results in cholesterol efflux; a promoter clearing mechanism after reach round of transcription is proposed. Involved in lipid metabolism: deacetylates LPIN1, thereby inhibiting diacylglycerol synthesis. Implicated in regulation of adipogenesis and fat mobilization in white adipocytes by repression of PPARG which probably involves association with NCOR1 and SMRT/NCOR2. Deacetylates p300/EP300 and PRMT1. Deacetylates ACSS2 leading to its activation, and HMGCS1 deacetylation. Involved in liver and muscle metabolism. Through deacetylation and activation of PPARGC1A is required to activate fatty acid oxidation in skeletal muscle under low-glucose conditions and is involved in glucose homeostasis. Involved in regulation of PPARA and fatty acid beta-oxidation in liver. Involved in positive regulation of insulin secretion in pancreatic beta cells in response to glucose; the function seems to imply transcriptional repression of UCP2. Proposed to deacetylate IRS2 thereby facilitating its insulin-induced tyrosine phosphorylation. Deacetylates SREBF1 isoform SREBP-1C thereby decreasing its stability and transactivation in lipogenic gene expression. Involved in DNA damage response by repressing genes which are involved in DNA repair, such as XPC and TP73, deacetylating XRCC6/Ku70, and facilitating recruitment of additional factors to sites of damaged DNA, such as SIRT1-deacetylated NBN can recruit ATM to initiate DNA repair and SIRT1-deacetylated XPA interacts with RPA2. Also involved in DNA repair of DNA double-strand breaks by homologous recombination and specifically single-strand annealing independently of XRCC6/Ku70 and NBN. Promotes DNA double-strand breaks by mediating deacetylation of SIRT6. Transcriptional suppression of XPC probably involves an E2F4:RBL2 suppressor complex and protein kinase B (AKT) signaling. Transcriptional suppression of TP73 probably involves E2F4 and PCAF. Deacetylates WRN thereby regulating its helicase and exonuclease activities and regulates WRN nuclear translocation in response to DNA damage. Deacetylates APEX1 at 'Lys-6' and 'Lys-7' and stimulates cellular AP endonuclease activity by promoting the association of APEX1 to XRCC1. Catalyzes deacetylation of ERCC4/XPF, thereby impairing interaction with ERCC1 and nucleotide excision repair (NER). Increases p53/TP53-mediated transcription-independent apoptosis by blocking nuclear translocation of cytoplasmic p53/TP53 and probably redirecting it to mitochondria. Deacetylates XRCC6/Ku70 at 'Lys-539' and 'Lys-542' causing it to sequester BAX away from mitochondria thereby inhibiting stress-induced apoptosis. Is involved in autophagy, presumably by deacetylating ATG5, ATG7 and MAP1LC3B/ATG8. Deacetylates AKT1 which leads to enhanced binding of AKT1 and PDK1 to PIP3 and promotes their activation. Proposed to play role in regulation of STK11/LBK1-dependent AMPK signaling pathways implicated in cellular senescence which seems to involve the regulation of the acetylation status of STK11/LBK1. Can deacetylate STK11/LBK1 and thereby increase its activity, cytoplasmic localization and association with STRAD; however, the relevance of such activity in normal cells is unclear. In endothelial cells is shown to inhibit STK11/LBK1 activity and to promote its degradation. Deacetylates SMAD7 at 'Lys-64' and 'Lys-70' thereby promoting its degradation. Deacetylates CIITA and augments its MHC class II transactivation and contributes to its stability. Deacetylates MECOM/EVI1. Deacetylates PML at 'Lys-487' and this deacetylation promotes PML control of PER2 nuclear localization. During the neurogenic transition, represses selective NOTCH1-target genes through histone deacetylation in a BCL6-dependent manner and leading to neuronal differentiation. Regulates the circadian expression of several core clock genes, including BMAL1, RORC, PER2 and CRY1 and plays a critical role in maintaining a controlled rhythmicity in histone acetylation, thereby contributing to circadian chromatin remodeling. Deacetylates BMAL1 and histones at the circadian gene promoters in order to facilitate repression by inhibitory components of the circadian oscillator. Deacetylates PER2, facilitating its ubiquitination and degradation by the proteasome. Protects cardiomyocytes against palmitate-induced apoptosis. Deacetylates XBP1 isoform 2; deacetylation decreases protein stability of XBP1 isoform 2 and inhibits its transcriptional activity. Deacetylates PCK1 and directs its activity toward phosphoenolpyruvate production promoting gluconeogenesis. Involved in the CCAR2-mediated regulation of PCK1 and NR1D1. Deacetylates CTNB1 at 'Lys-49'. In POMC (pro-opiomelanocortin) neurons, required for leptin-induced activation of PI3K signaling. Deacetylates SOX9; promoting SOX9 nuclear localization and transactivation activity. Involved in the regulation of centrosome duplication: deacetylates CENATAC in G1 phase, allowing for SASS6 accumulation on the centrosome and subsequent procentriole assembly. Deacetylates NDC80/HEC1. In addition to protein deacetylase activity, also acts as a protein-lysine deacylase by mediating protein delactylation, depropionylation and decrotonylation. Mediates depropionylation of Osterix (SP7). Catalyzes decrotonylation of histones; it however does not represent a major histone decrotonylase. Mediates protein delactylation of TEAD1 and YAP1. Its function is as follows. Deacetylates 'Lys-382' of p53/TP53, however with lower activity than isoform 1. In combination, the two isoforms exert an additive effect. Isoform 2 regulates p53/TP53 expression and cellular stress response and is in turn repressed by p53/TP53 presenting a SIRT1 isoform-dependent auto-regulatory loop. Functionally, catalytically inactive 75SirT1 may be involved in regulation of apoptosis. May be involved in protecting chondrocytes from apoptotic death by associating with cytochrome C and interfering with apoptosome assembly. (Microbial infection) In case of HIV-1 infection, interacts with and deacetylates the viral Tat protein. The viral Tat protein inhibits SIRT1 deacetylation activity toward RELA/NF-kappa-B p65, thereby potentiates its transcriptional activity and SIRT1 is proposed to contribute to T-cell hyperactivation during infection. The chain is NAD-dependent protein deacetylase sirtuin-1 from Homo sapiens (Human).